Consider the following 287-residue polypeptide: MAAGKEIRTQISSIKNTQKITSAMEMVAASKMKKAQDRMLASRPYCEKISNVIGHLAYAHSEFEYSYMNSSEKLQRIGVIIISSDRGLCGGLNTNLFRHILKQVVEYQAKSIEVDICTIGKKATSFFKNLGLNVKSVLTDLGDTPHFDDLLGTIKVMLDEFDADEIQQLSVAYNKFENIITQTPTIMQLVPMVAGESNNINHYWDYIYEPDAQEVLSALLVRYIEALVYQGLIENIACEQSSRMIAMKSATDNASDMVKELKLIYNKARQAAITQEISEIVSGAAAV.

This sequence belongs to the ATPase gamma chain family. As to quaternary structure, F-type ATPases have 2 components, CF(1) - the catalytic core - and CF(0) - the membrane proton channel. CF(1) has five subunits: alpha(3), beta(3), gamma(1), delta(1), epsilon(1). CF(0) has three main subunits: a, b and c.

Its subcellular location is the cell inner membrane. Its function is as follows. Produces ATP from ADP in the presence of a proton gradient across the membrane. The gamma chain is believed to be important in regulating ATPase activity and the flow of protons through the CF(0) complex. The sequence is that of ATP synthase gamma chain from Ruthia magnifica subsp. Calyptogena magnifica.